Here is a 371-residue protein sequence, read N- to C-terminus: Alanine dehydrogenase (371 aa).

The substrate site is built by R15 and K75. H96 (proton donor/acceptor) is an active-site residue. NAD(+) contacts are provided by residues S134, 178–179 (TA), D198, K203, S220, 239–240 (VL), 267–270 (IAID), R279, and 298–301 (VANM). The active-site Proton donor/acceptor is the D270. Residues E323 and H327 each contribute to the Mg(2+) site.

Belongs to the AlaDH/PNT family. As to quaternary structure, homohexamer. Trimer of dimers. Requires Mg(2+) as cofactor.

Its subcellular location is the secreted. It catalyses the reaction L-alanine + NAD(+) + H2O = pyruvate + NH4(+) + NADH + H(+). It functions in the pathway amino-acid degradation; L-alanine degradation via dehydrogenase pathway; NH(3) and pyruvate from L-alanine: step 1/1. Functionally, catalyzes the reversible reductive amination of pyruvate to L-alanine. However, since the physiological environment of M.tuberculosis has a neutral pH, it can be assumed that the enzyme catalyzes exclusively the formation of L-alanine. May play a role in cell wall synthesis as L-alanine is an important constituent of the peptidoglycan layer. In Mycobacterium tuberculosis (strain CDC 1551 / Oshkosh), this protein is Alanine dehydrogenase (ald).